A 501-amino-acid polypeptide reads, in one-letter code: Cytochrome P450 90A3 (501 aa).

A helical membrane pass occupies residues 2–22; the sequence is AAAALLLLAAAAAIVVVAMVL. Cys-446 is a heme binding site.

Belongs to the cytochrome P450 family. The cofactor is heme. As to expression, highly expressed in shoot apex and inflorenscence. Expressed in roots, stems, leaf blades and leaf sheaths.

The protein localises to the membrane. It functions in the pathway plant hormone biosynthesis; brassinosteroid biosynthesis. In terms of biological role, catalyzes the C23-alpha-hydroxylation step in brassinosteroid biosynthesis. Converts 6-deoxocathasterone (6-deoxoCT) to 6-deoxoteasterone (6-deoxoTE) in the late C6-oxidation pathway and cathasterone (CT) to teasterone (TE) in the early C6-oxidation pathway of brassinolide (BL) biosynthesis. This Oryza sativa subsp. japonica (Rice) protein is Cytochrome P450 90A3.